A 35-amino-acid polypeptide reads, in one-letter code: Cupiennin-2e (35 aa).

Glu-35 is subject to Glutamic acid 1-amide.

In terms of tissue distribution, expressed by the venom gland.

It localises to the secreted. This Cupiennius salei (American wandering spider) protein is Cupiennin-2e.